We begin with the raw amino-acid sequence, 409 residues long: MGPEKFARAKPHINIGTIGHVDHGKTTFTAAITATLANDGESFAKAYSDIDGAPEERARGITINTAHVEYQTRDRHYAHVDCPGHADYVKNMITGAAQMDGAILVVSAADGPMPQTREHILLAKQVGVPHIVVFLNKQDQVDDDELLELVELEVRELLSTYDFPGDDIPICPGSRLQAIEAISSNPTLKRGDNPWVDKIYALMDAVDAYIPTPERDVEKTFLMAIEDVFSITGRGTVATGRIERGVIKVVDNVEIVGIGDTKTTTITGIEMFQKTLEEGFAGDNVGILLRGVTRENIERGMVLAKPGTITPHTNFESEVYVLTKEEGGRHTPFFTGYSPIFYVITTDVTGSIDQFTADDGSIVEMVMPGDRIKMTAELIYPVAIEEGMRFVIREGGRTIGAGVVSKIVK.

The tr-type G domain occupies 10-214 (KPHINIGTIG…AVDAYIPTPE (205 aa)). Residues 19–26 (GHVDHGKT) form a G1 region. 19-26 (GHVDHGKT) contacts GTP. Position 26 (Thr-26) interacts with Mg(2+). The G2 stretch occupies residues 60-64 (GITIN). A G3 region spans residues 81-84 (DCPG). Residues 81-85 (DCPGH) and 136-139 (NKQD) contribute to the GTP site. Positions 136-139 (NKQD) are G4. A G5 region spans residues 174–176 (SRL).

It belongs to the TRAFAC class translation factor GTPase superfamily. Classic translation factor GTPase family. EF-Tu/EF-1A subfamily.

Its subcellular location is the plastid. It localises to the chloroplast. It carries out the reaction GTP + H2O = GDP + phosphate + H(+). In terms of biological role, GTP hydrolase that promotes the GTP-dependent binding of aminoacyl-tRNA to the A-site of ribosomes during protein biosynthesis. This is Elongation factor Tu, chloroplastic (tufA) from Stephanocyclus meneghinianus (Diatom).